The sequence spans 283 residues: Polyamine aminopropyltransferase (283 aa).

Positions 5–238 constitute a PABS domain; sequence TTWIDEYQKG…GIWSWTFASK (234 aa). Q32 contributes to the S-methyl-5'-thioadenosine binding site. H63 and D87 together coordinate spermidine. S-methyl-5'-thioadenosine is bound by residues E107 and 139–140; that span reads DG. D158 (proton acceptor) is an active-site residue. 158–161 contacts spermidine; that stretch reads DCSD.

It belongs to the spermidine/spermine synthase family. As to quaternary structure, homodimer or homotetramer.

Its subcellular location is the cytoplasm. It catalyses the reaction S-adenosyl 3-(methylsulfanyl)propylamine + putrescine = S-methyl-5'-thioadenosine + spermidine + H(+). It functions in the pathway amine and polyamine biosynthesis; spermidine biosynthesis; spermidine from putrescine: step 1/1. In terms of biological role, catalyzes the irreversible transfer of a propylamine group from the amino donor S-adenosylmethioninamine (decarboxy-AdoMet) to putrescine (1,4-diaminobutane) to yield spermidine. This Prochlorococcus marinus (strain MIT 9515) protein is Polyamine aminopropyltransferase.